The primary structure comprises 425 residues: MQTVIKNGTVYQNGRLIHADVLIEDQKIKAIGTDLTGDKVIDATGKLVSPGLVDVHVHYRDPGQTYKEDIETGSKAAAHGGFTTVGAMPNVTPVPDTPDLMKKMVQENKQKGIVHIFQYGPITKNETTDELPDYAALKKAGAFALSNDGHGVQTAQTMYLAMQEAKKNDLIVAAHAQDDSLFNHGIVNEGEKAKELNLPPVTELAETTQIARDLLLAEKTGVHYHICHVSTKTSVELVRMAKACGINVTCEAAPHHLLLTEDDIPKDNGYYKMNPPLRSKEDQAALLVGLLDGTIDLIATDHAPHAKQEKQGGMQNAAFGITGSETAFSTLYTKFVKEDKVFTLEQLLSWLSDQPAKVFGLKKAGVLEPGCPADVAIFDLEHETELKEKNYQSKGINTPFTGQKIYGATVMTMVDGEVVYQRGEK.

Zn(2+)-binding residues include His56 and His58. Residues 58-60 (HYR) and Asn90 each bind substrate. The Zn(2+) site is built by Asp148, His175, and His228. Substrate is bound at residue Asn274. Asp301 is a Zn(2+) binding site. Residue Asp301 is part of the active site. Substrate is bound by residues His305 and 319-320 (FG).

The protein belongs to the metallo-dependent hydrolases superfamily. DHOase family. Class I DHOase subfamily. Zn(2+) is required as a cofactor.

The enzyme catalyses (S)-dihydroorotate + H2O = N-carbamoyl-L-aspartate + H(+). Its pathway is pyrimidine metabolism; UMP biosynthesis via de novo pathway; (S)-dihydroorotate from bicarbonate: step 3/3. Its function is as follows. Catalyzes the reversible cyclization of carbamoyl aspartate to dihydroorotate. The protein is Dihydroorotase of Lactobacillus delbrueckii subsp. bulgaricus (strain ATCC 11842 / DSM 20081 / BCRC 10696 / JCM 1002 / NBRC 13953 / NCIMB 11778 / NCTC 12712 / WDCM 00102 / Lb 14).